We begin with the raw amino-acid sequence, 238 residues long: Ribonuclease PH (238 aa).

Residues arginine 86 and 124–126 (GTR) contribute to the phosphate site.

It belongs to the RNase PH family. In terms of assembly, homohexameric ring arranged as a trimer of dimers.

It catalyses the reaction tRNA(n+1) + phosphate = tRNA(n) + a ribonucleoside 5'-diphosphate. Functionally, phosphorolytic 3'-5' exoribonuclease that plays an important role in tRNA 3'-end maturation. Removes nucleotide residues following the 3'-CCA terminus of tRNAs; can also add nucleotides to the ends of RNA molecules by using nucleoside diphosphates as substrates, but this may not be physiologically important. Probably plays a role in initiation of 16S rRNA degradation (leading to ribosome degradation) during starvation. The sequence is that of Ribonuclease PH from Agrobacterium fabrum (strain C58 / ATCC 33970) (Agrobacterium tumefaciens (strain C58)).